The following is a 351-amino-acid chain: Transmembrane protein 115 (351 aa).

At 1–19 (MQRALPGARQHLGAILSSA) the chain is on the cytoplasmic side. The interval 1-205 (MQRALPGARQ…FGLISSWVYL (205 aa)) is mediates homooligomerization. The chain crosses the membrane as a helical span at residues 20–40 (SVVVKALCAAVLFLYLLSFAV). Residues 41-97 (DTGCLAVTPGYLFPPNFWIWTLATHGLMEQHVWDVAISLATVVVAGRLLEPLWGALE) lie on the Lumenal side of the membrane. A helical membrane pass occupies residues 98–118 (LLIFFSVVNVSVGLLGAFAYL). Residues 119–126 (LTYMASFN) lie on the Cytoplasmic side of the membrane. The helical transmembrane segment at 127–147 (LVYLFTVRIHGALGFLGGVLV) threads the bilayer. The Lumenal portion of the chain corresponds to 148-165 (ALKQTMGDCVVLRVPQVR). The chain crosses the membrane as a helical span at residues 166–186 (VSVVPMLLLGLLLLLRLATLL). At 187–351 (QSPALASYGF…ITFEAAPPTL (165 aa)) the chain is on the cytoplasmic side. The mediates localization to the Golgi stretch occupies residues 206–229 (RFYQRHSRGRGDMADHFAFATFFP). The interval 300–351 (DQSVWPSMDDDEEEAGAKVDSPMPSDKAPTLPGKGAVPESSLITFEAAPPTL) is disordered. At T329 the chain carries Phosphothreonine.

The protein belongs to the TMEM115 family. Homooligomer. Interacts with COPB1. May interact with LMAN1. Interacts with the COG complex; probably through COG3.

It localises to the golgi apparatus. It is found in the golgi stack membrane. May play a role in retrograde transport of proteins from the Golgi to the endoplasmic reticulum. May indirectly play a role in protein glycosylation in the Golgi. This Bos taurus (Bovine) protein is Transmembrane protein 115.